Here is a 152-residue protein sequence, read N- to C-terminus: MSVLGVGCDVVHLPRMHRLLTKYDAGSRGFQRVVSKFMHPTERIALGVDGASLSAGQIRYIAGTWALKEAALKALHCAAPLHTVLPPAMFIYTKLLYRQRRSNGVPQLLLDNEALRLDQLQFLRQAKFLSTLSHDNEYLVAYTTLIDTKNLV.

This sequence belongs to the P-Pant transferase superfamily. AcpS family.

It is found in the mitochondrion. It carries out the reaction apo-[ACP] + CoA = holo-[ACP] + adenosine 3',5'-bisphosphate + H(+). Transfers the 4'-phosphopantetheine moiety from coenzyme A to a Ser of mitochondrial acyl-carrier-protein. The protein is Mitochondrial holo-[acyl-carrier-protein] synthase (PPT2) of Candida glabrata (strain ATCC 2001 / BCRC 20586 / JCM 3761 / NBRC 0622 / NRRL Y-65 / CBS 138) (Yeast).